The sequence spans 426 residues: UPF0229 protein YeaH (426 aa).

Residues 78–92 are compositionally biased toward basic and acidic residues; sequence GNDHFIQNDRIERPQ. Residues 78–108 form a disordered region; that stretch reads GNDHFIQNDRIERPQDGGGSGSGNGQASQDG.

The protein belongs to the UPF0229 family.

In Salmonella arizonae (strain ATCC BAA-731 / CDC346-86 / RSK2980), this protein is UPF0229 protein YeaH.